A 794-amino-acid chain; its full sequence is DNA ligase (794 aa).

Residues 35–39, 84–85, and Glu126 each bind NAD(+); these read DAEYD and SL. Residue Lys128 is the N6-AMP-lysine intermediate of the active site. NAD(+)-binding residues include Arg149, Glu186, Lys302, and Lys326. Residues Cys420, Cys423, Cys450, and Cys456 each contribute to the Zn(2+) site. In terms of domain architecture, BRCT spans 711-794; it reads VEGLPLAGQT…KLFDEHGVAR (84 aa).

Belongs to the NAD-dependent DNA ligase family. LigA subfamily. Mg(2+) serves as cofactor. Requires Mn(2+) as cofactor.

The enzyme catalyses NAD(+) + (deoxyribonucleotide)n-3'-hydroxyl + 5'-phospho-(deoxyribonucleotide)m = (deoxyribonucleotide)n+m + AMP + beta-nicotinamide D-nucleotide.. In terms of biological role, DNA ligase that catalyzes the formation of phosphodiester linkages between 5'-phosphoryl and 3'-hydroxyl groups in double-stranded DNA using NAD as a coenzyme and as the energy source for the reaction. It is essential for DNA replication and repair of damaged DNA. The protein is DNA ligase of Pseudomonas aeruginosa (strain UCBPP-PA14).